We begin with the raw amino-acid sequence, 47 residues long: High light-inducible protein HliC (47 aa).

Over 1-14 (MNNENSKFGFTAFA) the chain is Cytoplasmic. The Chlorophyll-binding motif signature appears at 15–20 (ENWNGR). The hydrophobic stretch at 15 to 36 (ENWNGRLAMIGFSSALILELVS) threads the membrane. Residues 37–47 (GQGVLHFFGIL) lie on the Lumenal, thylakoid side of the membrane.

It belongs to the Hlip family. In terms of assembly, forms heterodimers with both HliA and HliB; these are associated with photosystem II (PSII) assembly intermediates containing CP47 (psbB). In the absence of CP47 (psbB) and HliD, forms a homooligomer in vivo that binds 2 chlorophyll a and 1 beta-carotenoid per monomer. Cofractionates in an approximately 50 kDa fraction the thylakoid membrane with HliD. Associated in vivo with monomeric PSII. Purified in several chlorophyll- and carotenoid-containing complexes, including photosystem II (PSII) assembly intermediate complex RCII* (iD1, D1, D2, PsbE, PsbF, PsbI, Ycf39, Ycf48, HliC and HliD) and the Ycf39-Hlip complex (Ycf39, HliC, HliD and pigments).

Its subcellular location is the cellular thylakoid membrane. Its function is as follows. Forms a number of heteromers involved in photosystem II (PSII) assembly and/or repair under high light stress. Required for binding of chlorophyll and carotenoids by the Ycf39-Hlip complex. The Ycf39-Hlip complex binds D1 at an early stage of PSII assembly along with Ycf48, ribosomes and ChlG, the last enzyme in chlorophyll biosynthesis; it may be involved in chlorophyll reuse and delivery to D1 in the initial stages of PSII assembly. HliA-HliC and HliB-HliC heterodimers bind chlorophyll and carotenoids in a 1:0.6 ratio. Complexes bind mostly beta-carotenoid, but minor amounts of echinenone and beta-crytoxanthin are also detected. The complexes efficiently quench chlorophyll fluorescence, contributing to photoprotection. Deletion of 4 to 5 members of the Hlip family suggests the proteins are involved in regulation of chlorophyll biosynthesis, in stabilization of chlorophyll-binding proteins and/or in reuse of chlorophylls, and may regulate tetrapyrrole biosynthesis. Might bind chlorophyll and/or carotenoids in association with HliD (called the ScpBE pair). The Hlips might regulate tetrapyrrole biosynthesis, maybe at the level of aminolevulinic acid synthesis and probably stabilize PSII assembly intermediates. The polypeptide is High light-inducible protein HliC (hliC) (Synechocystis sp. (strain ATCC 27184 / PCC 6803 / Kazusa)).